The primary structure comprises 546 residues: MATVAAAARGAGARAAAGLRSCGGAVARERPRSGCARRLCSAPAAPAAVDMKSYLWARYHEAKRSTDELVPSIMNNLLNPDAIFSNNEMSLSDIEIYGFDYDYTLVFYSKHLHTLIFNAARDLLINEHRYPVEIRKYEYDPSFAIRGLHYDVQRAVLMKIDAFHYIQMGTVYRGLSVVPDEEVIDMYEGSHVPLEQMSDFYGKSSHGNTMKQFMDIFSLPEMTLLSCVNEHFLKNNIDYEPVHLYKDVKDSIRDVHIKGIMYRAIEADIEKYICYADQTRAVLAKLAAHGKKMFLITNSPSSFVDKGMRYIVGKDWRDLFDVVIVQAEKPNFFNDKRRPFRKVNEKGVLLWDKIHKLQKGQIYKQGNLYEFLKLTGWRGSKVLYFGDHIYSDLADLTLKHGWRTGAIIPELRSELRIMNTEQYIQTMTWLQTLTGLLEQMQVHRDAESQLVLQEWKKERKEMREMTKSFFNAQFGSLFRTDQNPTYFLRRLSRFADIYMASLSCLLNYDVHHTFYPRRTPLQHELPAWSDSPSAFKAPLLQEAQAK.

Aspartate 100 (nucleophile) is an active-site residue. Positions 100 and 102 each coordinate Mg(2+). The active-site Proton donor is aspartate 102. A substrate-binding site is contributed by 249–257 (KDSIRDVHI). Aspartate 387 serves as a coordination point for Mg(2+).

It belongs to the 5'(3')-deoxyribonucleotidase family. Mg(2+) is required as a cofactor.

This is 5'-nucleotidase domain-containing protein 3 (Nt5dc3) from Mus musculus (Mouse).